The primary structure comprises 204 residues: Protein Mis18-alpha (204 aa).

Serine 13, serine 16, and serine 17 each carry phosphoserine. Residues proline 51 to leucine 149 enclose the Mis18 domain. Residues cysteine 56, cysteine 59, cysteine 112, and cysteine 115 each contribute to the Zn(2+) site. A Glycyl lysine isopeptide (Lys-Gly) (interchain with G-Cter in SUMO2) cross-link involves residue lysine 133. Serine 204 carries the phosphoserine modification.

It belongs to the mis18 family. Homodimer, and heterodimer with OIP5/MIS18B. Identified in a complex containing MIS18A, OIP5/MIS18B, MIS18BP1, RBBP7 and RBBP4.

Its subcellular location is the nucleus. The protein localises to the chromosome. It is found in the centromere. Required for recruitment of CENPA to centromeres and normal chromosome segregation during mitosis. The chain is Protein Mis18-alpha (Mis18a) from Mus musculus (Mouse).